Here is a 502-residue protein sequence, read N- to C-terminus: Ubiquitin-like-specific protease 1A (502 aa).

Residues histidine 393, aspartate 410, and cysteine 461 contribute to the active site.

This sequence belongs to the peptidase C48 family.

Functionally, protease that catalyzes two essential functions in the SUMO pathway: processing of full-length SUMOs to their mature forms and deconjugation of SUMO from targeted proteins. Cleaves precursors of SUM1 and SUM2, and very inefficiently of SUM3. Seems to be the only ULP1 able to cleave SUM3 precursors. Cleaves SUMO peptides better than SUMO-conjugated proteins. This Arabidopsis thaliana (Mouse-ear cress) protein is Ubiquitin-like-specific protease 1A (ULP1A).